Reading from the N-terminus, the 455-residue chain is UDP-N-acetylmuramoylalanine--D-glutamate ligase (455 aa).

An ATP-binding site is contributed by 117–123; sequence GSAGKTT.

Belongs to the MurCDEF family.

The protein localises to the cytoplasm. It carries out the reaction UDP-N-acetyl-alpha-D-muramoyl-L-alanine + D-glutamate + ATP = UDP-N-acetyl-alpha-D-muramoyl-L-alanyl-D-glutamate + ADP + phosphate + H(+). It functions in the pathway cell wall biogenesis; peptidoglycan biosynthesis. Cell wall formation. Catalyzes the addition of glutamate to the nucleotide precursor UDP-N-acetylmuramoyl-L-alanine (UMA). This is UDP-N-acetylmuramoylalanine--D-glutamate ligase from Symbiobacterium thermophilum (strain DSM 24528 / JCM 14929 / IAM 14863 / T).